Reading from the N-terminus, the 230-residue chain is Ribonuclease 3 (230 aa).

One can recognise an RNase III domain in the interval 10–133 (DPRLLSRIGY…IIGAIYLDSG (124 aa)). Glu46 contributes to the Mg(2+) binding site. Residue Asp50 is part of the active site. Positions 119 and 122 each coordinate Mg(2+). Residue Glu122 is part of the active site. Positions 161–230 (DPKSRLQEYL…AAEILKLLEQ (70 aa)) constitute a DRBM domain.

This sequence belongs to the ribonuclease III family. In terms of assembly, homodimer. It depends on Mg(2+) as a cofactor.

Its subcellular location is the cytoplasm. The catalysed reaction is Endonucleolytic cleavage to 5'-phosphomonoester.. Digests double-stranded RNA. Involved in the processing of primary rRNA transcript to yield the immediate precursors to the large and small rRNAs (23S and 16S). Processes some mRNAs, and tRNAs when they are encoded in the rRNA operon. Processes pre-crRNA and tracrRNA of type II CRISPR loci if present in the organism. The chain is Ribonuclease 3 (rnc) from Acinetobacter pittii (strain PHEA-2).